A 552-amino-acid chain; its full sequence is MKFKYIVLLFALSLALITVNGLEIKDIDYSDSSQYLIITVSNPDNNINANISIIGYIDNKIDTQVEMFNYSIPKYSLMFIRKKMVFNEKGVHTVFVTIKSNNITYTFYKKINITYAYNSKVPVPEEEVTKKIEIEGLEFEICPYPYPPFYDFVYVTIRNNDYVPHYVNISFTASLQGTYYIIKDNKIIKSNPPSNGLIIKSWTPNVYVPPKSKIIIPIKVNFYYSGKYTITVKAVSDNHYSTEKTVKGNTVILKSLFGDEIKVYNVEIACPLYVYNVRCEDEYGDYAYSNWFDVDVNNTVDYDVYGTLQVFLCKKEGDNYLILNNKTINKYFLAKEFNDGYSIPVKLNTSALNPYDENFTIFVLCKTGNMESFYYKTFTKPIKINSLEVKNYPEHYYFVDESIFYDVYVNVTNNLNKKIYANISIKDIYNKTYSKEVELNKSCVNIIKFSGLKINAKDLSHDGKIKLKFIVTAITPPYEKYYIIKKNISINLSLIPTPPVYLCSNLNDEIFVGYPQNLSFSLKKVVGRCVETRVYITVPDDIKKYTILKRSI.

This is an uncharacterized protein from Methanocaldococcus jannaschii (strain ATCC 43067 / DSM 2661 / JAL-1 / JCM 10045 / NBRC 100440) (Methanococcus jannaschii).